The sequence spans 931 residues: Beta-mannosidase A (931 aa).

The N-terminal stretch at 1-21 (MRHSIGLAAALLAPTLPVALG) is a signal peptide. N-linked (GlcNAc...) asparagine glycosylation is found at Asn-40, Asn-79, Asn-247, Asn-282, and Asn-347. Glu-479 functions as the Proton donor in the catalytic mechanism. 8 N-linked (GlcNAc...) asparagine glycosylation sites follow: Asn-550, Asn-608, Asn-658, Asn-738, Asn-790, Asn-798, Asn-830, and Asn-918.

This sequence belongs to the glycosyl hydrolase 2 family. Beta-mannosidase A subfamily. As to quaternary structure, homodimer. Post-translationally, N-glycosylated.

The protein localises to the secreted. It carries out the reaction Hydrolysis of terminal, non-reducing beta-D-mannose residues in beta-D-mannosides.. The protein operates within glycan metabolism; N-glycan degradation. Functionally, exoglycosidase that cleaves the single beta-linked mannose residue from the non-reducing end of beta-mannosidic oligosaccharides of various complexity and length. Involved in the degradation of polymeric mannan and galactomannan. Releases the terminal mannose residue from mannobiose and mannotriose, as well as from galactosyl-mannobiose (GM2), galactosyl-mannotriose (GM3) and di-galactosyl-mannopentaose (G2M5). In Aspergillus niger, this protein is Beta-mannosidase A (mndA).